The sequence spans 160 residues: UPF0178 protein XC_1827 (160 aa).

It belongs to the UPF0178 family.

The polypeptide is UPF0178 protein XC_1827 (Xanthomonas campestris pv. campestris (strain 8004)).